Here is a 280-residue protein sequence, read N- to C-terminus: Ribosomal RNA small subunit methyltransferase A (280 aa).

The S-adenosyl-L-methionine site is built by H15, L17, G42, E64, D89, and N109.

Belongs to the class I-like SAM-binding methyltransferase superfamily. rRNA adenine N(6)-methyltransferase family. RsmA subfamily.

It localises to the cytoplasm. It carries out the reaction adenosine(1518)/adenosine(1519) in 16S rRNA + 4 S-adenosyl-L-methionine = N(6)-dimethyladenosine(1518)/N(6)-dimethyladenosine(1519) in 16S rRNA + 4 S-adenosyl-L-homocysteine + 4 H(+). Functionally, specifically dimethylates two adjacent adenosines (A1518 and A1519) in the loop of a conserved hairpin near the 3'-end of 16S rRNA in the 30S particle. May play a critical role in biogenesis of 30S subunits. The protein is Ribosomal RNA small subunit methyltransferase A of Prochlorococcus marinus (strain MIT 9313).